Reading from the N-terminus, the 120-residue chain is NAD(P)H-quinone oxidoreductase subunit 3, chloroplastic (120 aa).

The next 3 helical transmembrane spans lie at 9-29, 64-84, and 88-108; these read IFWAFLIISSLIPILVFFISG, MFALVFVVFDVETVFLYPWAM, and VLGVSVFVEALIFVLILIVGL.

The protein belongs to the complex I subunit 3 family. NDH is composed of at least 16 different subunits, 5 of which are encoded in the nucleus.

Its subcellular location is the plastid. The protein resides in the chloroplast thylakoid membrane. It catalyses the reaction a plastoquinone + NADH + (n+1) H(+)(in) = a plastoquinol + NAD(+) + n H(+)(out). The catalysed reaction is a plastoquinone + NADPH + (n+1) H(+)(in) = a plastoquinol + NADP(+) + n H(+)(out). Functionally, NDH shuttles electrons from NAD(P)H:plastoquinone, via FMN and iron-sulfur (Fe-S) centers, to quinones in the photosynthetic chain and possibly in a chloroplast respiratory chain. The immediate electron acceptor for the enzyme in this species is believed to be plastoquinone. Couples the redox reaction to proton translocation, and thus conserves the redox energy in a proton gradient. This chain is NAD(P)H-quinone oxidoreductase subunit 3, chloroplastic, found in Lactuca sativa (Garden lettuce).